The sequence spans 517 residues: MDIIGGQHLRQMWDDLADVYGHKTALICESSGGVVNRYSYLELNQEINRTANLFYTLGIRKGDKVALHLDNCPEFIFCWFGLAKIGAIMVPINARLLREESAWILQNSQACLLVTSAQFYPMYQQIQQEDATQLRHICLTDVALPADDGVSSFTQLKNQQPATLCYAPPLSTDDTAEILFTSGTTSRPKGVVITHYNLRFAGYYSAWQCALRDDDVYLTVMPAFHIDCQCTAAMAAFSAGATFVLVEKYSARAFWGQVQKYRATITECIPMMIRTLMVQPPSANDRQHRLREVMFYLNLSEQEKDAFCERFGVRLLTSYGMTETIVGIIGDRPGDKRRWPSIGRAGFCYEAEIRDDHNRPLPAGEIGEICIKGVPGKTIFKEYFLNPKATAKVLEADGWLHTGDTGYCDEEGFFYFVDRRCNMIKRGGENVSCVELENIIATHPKIQDIVVVGIKDSIRDEAIKAFVVVNEGETLSEEEFFRFCEQNMAKFKVPSYLEIRKDLPRNCSGKIIRKNLK.

It belongs to the ATP-dependent AMP-binding enzyme family.

The catalysed reaction is 4-(trimethylamino)butanoate + ATP + CoA = 4-(trimethylamino)butanoyl-CoA + AMP + diphosphate. It catalyses the reaction crotonobetaine + ATP + CoA = crotonobetainyl-CoA + AMP + diphosphate. It carries out the reaction (R)-carnitine + ATP + CoA = (R)-carnitinyl-CoA + AMP + diphosphate. It participates in amine and polyamine metabolism; carnitine metabolism. In terms of biological role, catalyzes the transfer of CoA to carnitine, generating the initial carnitinyl-CoA needed for the CaiB reaction cycle. Also has activity toward crotonobetaine and gamma-butyrobetaine. The polypeptide is Crotonobetaine/carnitine--CoA ligase (Escherichia coli O8 (strain IAI1)).